A 368-amino-acid chain; its full sequence is 3-dehydroquinate synthase (368 aa).

Residues 71–76 (DGESFK), 105–109 (GVIGD), 129–130 (TT), Lys142, Lys151, and 169–172 (TLRT) each bind NAD(+). Zn(2+)-binding residues include Glu184, His247, and His264.

It belongs to the sugar phosphate cyclases superfamily. Dehydroquinate synthase family. It depends on NAD(+) as a cofactor. Co(2+) serves as cofactor. Zn(2+) is required as a cofactor.

The protein localises to the cytoplasm. It carries out the reaction 7-phospho-2-dehydro-3-deoxy-D-arabino-heptonate = 3-dehydroquinate + phosphate. It participates in metabolic intermediate biosynthesis; chorismate biosynthesis; chorismate from D-erythrose 4-phosphate and phosphoenolpyruvate: step 2/7. Catalyzes the conversion of 3-deoxy-D-arabino-heptulosonate 7-phosphate (DAHP) to dehydroquinate (DHQ). The chain is 3-dehydroquinate synthase from Ralstonia nicotianae (strain ATCC BAA-1114 / GMI1000) (Ralstonia solanacearum).